Here is a 623-residue protein sequence, read N- to C-terminus: Aspartate--tRNA(Asp/Asn) ligase (623 aa).

Glu175 contacts L-aspartate. Residues 199-202 (QQFK) are aspartate. L-aspartate contacts are provided by Arg221 and His455. 221-223 (RDE) provides a ligand contact to ATP. Glu517 contacts ATP. Arg524 contributes to the L-aspartate binding site. 569-572 (GVDR) lines the ATP pocket.

The protein belongs to the class-II aminoacyl-tRNA synthetase family. Type 1 subfamily. Homodimer.

The protein resides in the cytoplasm. The enzyme catalyses tRNA(Asx) + L-aspartate + ATP = L-aspartyl-tRNA(Asx) + AMP + diphosphate. Aspartyl-tRNA synthetase with relaxed tRNA specificity since it is able to aspartylate not only its cognate tRNA(Asp) but also tRNA(Asn). Reaction proceeds in two steps: L-aspartate is first activated by ATP to form Asp-AMP and then transferred to the acceptor end of tRNA(Asp/Asn). This is Aspartate--tRNA(Asp/Asn) ligase from Methylocella silvestris (strain DSM 15510 / CIP 108128 / LMG 27833 / NCIMB 13906 / BL2).